A 293-amino-acid chain; its full sequence is MPWIQLRINTNSDHADAIGDILMEQGAVSITYEDGKDTPIFEPKLGETPLWQDTVVVALFDAGTDLAPTVALLATSPMLGENFPHKIEQIEDKDWVREWMDSFHPIQFGTRLWICPSWREIPHPDAVNVILDPGLAFGTGTHPTTALCLEWLDSLDLSDEEVIDFGCGSGILAIAALKLGAKKVTGVDIDYQAIDASQANAVRNNVQDQLALYLPEDQPEGLIADVLVANILAGPLRELAPLIAEKVRQGGKLALSGLLQEQAEELAEFYSQWFQMDPPAYKDDWSRLTGIRK.

Residues Thr145, Gly166, Asp188, and Asn230 each contribute to the S-adenosyl-L-methionine site.

This sequence belongs to the methyltransferase superfamily. PrmA family.

The protein resides in the cytoplasm. It catalyses the reaction L-lysyl-[protein] + 3 S-adenosyl-L-methionine = N(6),N(6),N(6)-trimethyl-L-lysyl-[protein] + 3 S-adenosyl-L-homocysteine + 3 H(+). In terms of biological role, methylates ribosomal protein L11. This is Ribosomal protein L11 methyltransferase from Shewanella denitrificans (strain OS217 / ATCC BAA-1090 / DSM 15013).